The sequence spans 207 residues: Small ribosomal subunit protein uS4 (207 aa).

Residues 31 to 51 form a disordered region; sequence KCKLDSKPGQHGRTSGARTSD. Positions 97–162 constitute an S4 RNA-binding domain; that stretch reads SRLDNVVYRM…QGRIRESLDL (66 aa).

It belongs to the universal ribosomal protein uS4 family. Part of the 30S ribosomal subunit. Contacts protein S5. The interaction surface between S4 and S5 is involved in control of translational fidelity.

Functionally, one of the primary rRNA binding proteins, it binds directly to 16S rRNA where it nucleates assembly of the body of the 30S subunit. With S5 and S12 plays an important role in translational accuracy. The chain is Small ribosomal subunit protein uS4 from Bordetella bronchiseptica (strain ATCC BAA-588 / NCTC 13252 / RB50) (Alcaligenes bronchisepticus).